Reading from the N-terminus, the 562-residue chain is Probable sesquiterpene synthase (562 aa).

Mg(2+)-binding residues include Asp-315, Asp-319, and Glu-467. Residues 315-319 carry the DDXXD motif motif; the sequence is DDIYD.

Belongs to the terpene synthase family. Tpsa subfamily. It depends on Mg(2+) as a cofactor. Requires Mn(2+) as cofactor.

Sesquiterpene synthase. This Santalum austrocaledonicum (Sandalwood) protein is Probable sesquiterpene synthase (SesquiTPS).